A 254-amino-acid polypeptide reads, in one-letter code: MTPGIRPLVAGNWKMNGKGESLTELRAIAAGLSSDLGRKLDAVICVPATLLSRAAETLEGETVGLGGQDAHFKTSGAHTGDISPEMLKEAGATHVILGHSERRTDHHESNKLICAKTEAAWAAGLVAIVCVGETASERKAERALDVIGDQLSGSLPDGVTAENTIIAYEPVWAIGTGLTPTVQDVRAAHAFMREQLIERFGAKGAHLRLLYGGSVKPSNAAELLGVADVDGALVGGASLKAADFLAICETYRNL.

12–14 (NWK) serves as a coordination point for substrate. The active-site Electrophile is His-99. Catalysis depends on Glu-169, which acts as the Proton acceptor. Substrate-binding positions include Gly-175, Ser-214, and 235–236 (GG).

The protein belongs to the triosephosphate isomerase family. Homodimer.

The protein resides in the cytoplasm. The enzyme catalyses D-glyceraldehyde 3-phosphate = dihydroxyacetone phosphate. It participates in carbohydrate biosynthesis; gluconeogenesis. It functions in the pathway carbohydrate degradation; glycolysis; D-glyceraldehyde 3-phosphate from glycerone phosphate: step 1/1. Its function is as follows. Involved in the gluconeogenesis. Catalyzes stereospecifically the conversion of dihydroxyacetone phosphate (DHAP) to D-glyceraldehyde-3-phosphate (G3P). In Brucella abortus biovar 1 (strain 9-941), this protein is Triosephosphate isomerase.